Consider the following 540-residue polypeptide: Lysosomal cobalamin transport escort protein LMBD1 (540 aa).

The Extracellular portion of the chain corresponds to 1–10 (MATSGAASAE). The helical transmembrane segment at 11-31 (LVIGWCIFGLLLLAILAFCWI) threads the bilayer. The Cytoplasmic portion of the chain corresponds to 32–50 (YVRKYQSRRESEVVSTITA). A helical transmembrane segment spans residues 51–71 (IFSLAIALITSALLPVDIFLV). Residues 72-100 (SYMKNQNGTFKDWANANVSRQIEDTVLYG) are Extracellular-facing. Residues N78 and N88 are each glycosylated (N-linked (GlcNAc...) asparagine). A helical membrane pass occupies residues 101-121 (YYTLYSVILFCVFFWIPFVYF). The Cytoplasmic portion of the chain corresponds to 122–144 (YYEEKDDDDTSKCTQIKTALKYT). A helical membrane pass occupies residues 145–165 (LGFVVICALLLLVGAFVPLNV). The Extracellular portion of the chain corresponds to 166–188 (PNNKNSTEWEKVKSLFEELGSSH). N-linked (GlcNAc...) asparagine glycosylation occurs at N170. The chain crosses the membrane as a helical span at residues 189 to 209 (GLAALSFSISSLTLIGMLAAI). The Cytoplasmic segment spans residues 210-305 (TYTAYGMSAL…KFCGALRPLK (96 aa)). Residues 232 to 235 (YERL) carry the YERL motif; mediates interaction with adapter protein complex 2 and is essential for its function in clathrin-mediated endocytosis of INSR motif. The residue at position 238 (T238) is a Phosphothreonine. The short motif at 294–297 (WTKF) is the WTKF motif; mediates interaction with adapter protein complex 2 and is essential for its function in clathrin-mediated endocytosis of INSR element. Residues 306-326 (IVWGIFFILVALLFVISLFLS) form a helical membrane-spanning segment. The Extracellular segment spans residues 327 to 364 (NLDKALHSAGIDSGFIIFGANLSNPLNMLLPLLQTVFP). The N-linked (GlcNAc...) asparagine glycan is linked to N347. The helical transmembrane segment at 365–385 (LDYILITIIIMYFIFTSMAGI) threads the bilayer. Over 386-408 (RNIGIWFFWIRLYKIRRGRTRPQ) the chain is Cytoplasmic. A helical transmembrane segment spans residues 409–429 (ALLFLCMILLLIVLHTSYMIY). The Extracellular portion of the chain corresponds to 430-486 (SLAPQYVMYGSQNYLIETNITSDNHKGNSTLSVPKRCDADAPEDQCTVTRTYLFLHK). Residues N448 and N457 are each glycosylated (N-linked (GlcNAc...) asparagine). A helical transmembrane segment spans residues 487–507 (FWFFSAAYYFGNWAFLGVFLI). Residues 508-540 (GLIVSCCKGKKSVIEGVDEDSDISDDEPSVYSA) are Cytoplasmic-facing. Residues S528 and S531 each carry the phosphoserine modification.

Belongs to the LIMR family. LMBRD1 subfamily. (Microbial infection) Interacts with hepatitis delta virus NES (HDAg-L). As to quaternary structure, interacts with ABCD4; this interaction induces the translocation of ABCD4 from the endoplasmic reticulum to the lysosome. Interacts with ABCD4 and MMACHC; this interaction ensures the transport of cobalamin from the lysosome to the cytoplasm. Interacts with INSR, adapter protein complex 2 and clathrin heavy chain. N-glycosylated. Isoform 3 is expressed in liver.

The protein localises to the endoplasmic reticulum membrane. It is found in the lysosome membrane. Its subcellular location is the cell membrane. It localises to the cytoplasmic vesicle. The protein resides in the clathrin-coated vesicle. In terms of biological role, lysosomal membrane chaperone required to export cobalamin (vitamin B12) from the lysosome to the cytosol, allowing its conversion to cofactors. Targets ABCD4 transporter from the endoplasmic reticulum to the lysosome. Then forms a complex with lysosomal ABCD4 and cytoplasmic MMACHC to transport cobalamin across the lysosomal membrane. Acts as an adapter protein which plays an important role in mediating and regulating the internalization of the insulin receptor (INSR). Involved in clathrin-mediated endocytosis of INSR via its interaction with adapter protein complex 2. Essential for the initiation of gastrulation and early formation of mesoderm structures during embryogenesis. Its function is as follows. (Microbial infection) May play a role in the assembly of hepatitis delta virus (HDV). This is Lysosomal cobalamin transport escort protein LMBD1 from Homo sapiens (Human).